The primary structure comprises 81 residues: Apolipoprotein C-I, acidic form (81 aa).

Positions 1–24 (MRLFLSLLVVVLSIVLEGPTPAQG) are cleaved as a signal peptide.

This sequence belongs to the apolipoprotein C1 family.

The protein localises to the secreted. The sequence is that of Apolipoprotein C-I, acidic form (APOC1A) from Theropithecus gelada (Gelada baboon).